A 490-amino-acid polypeptide reads, in one-letter code: Cysteine protease 1 (490 aa).

An N-terminal signal peptide occupies residues 1-31; sequence MAGGGGKSVAAALAMACFLLILAAFAPPAAA. The propeptide at 32 to 154 is activation peptide; it reads APPDIMSIIR…EAYRHDGVEA (123 aa). 5 cysteine pairs are disulfide-bonded: cysteine 177–cysteine 220, cysteine 211–cysteine 253, cysteine 311–cysteine 364, cysteine 395–cysteine 407, and cysteine 401–cysteine 422. Cysteine 180 is an active-site residue. Active-site residues include histidine 317 and asparagine 339. An N-linked (GlcNAc...) asparagine glycan is attached at asparagine 356. Positions 379-490 are cleaved as a propeptide — removed in mature form; it reads NPKPSPPSPA…FVVLNREDLV (112 aa).

This sequence belongs to the peptidase C1 family. As to expression, highly expressed in the tapetum and developing pollen of the anther locules. Weakly expressed in root and germinating seed, hardly in the anther-less-flower and not detected in leaf.

In terms of biological role, cysteine protease that may play a role in pollen development. May be regulated by the transcription factor UDT1 in developing anthers and play a role in tapetum development. Positively regulated by the transcription factor TDR in developing anthers and may play a role in tapetum programmed cell death (PCD). The protein is Cysteine protease 1 (CP1) of Oryza sativa subsp. japonica (Rice).